A 247-amino-acid chain; its full sequence is NAD(P)H-quinone oxidoreductase subunit K, chloroplastic (247 aa).

Residues cysteine 64, cysteine 65, cysteine 129, and cysteine 160 each coordinate [4Fe-4S] cluster.

The protein belongs to the complex I 20 kDa subunit family. As to quaternary structure, NDH is composed of at least 16 different subunits, 5 of which are encoded in the nucleus. Requires [4Fe-4S] cluster as cofactor.

It localises to the plastid. The protein localises to the chloroplast thylakoid membrane. It carries out the reaction a plastoquinone + NADH + (n+1) H(+)(in) = a plastoquinol + NAD(+) + n H(+)(out). The catalysed reaction is a plastoquinone + NADPH + (n+1) H(+)(in) = a plastoquinol + NADP(+) + n H(+)(out). Functionally, NDH shuttles electrons from NAD(P)H:plastoquinone, via FMN and iron-sulfur (Fe-S) centers, to quinones in the photosynthetic chain and possibly in a chloroplast respiratory chain. The immediate electron acceptor for the enzyme in this species is believed to be plastoquinone. Couples the redox reaction to proton translocation, and thus conserves the redox energy in a proton gradient. The polypeptide is NAD(P)H-quinone oxidoreductase subunit K, chloroplastic (Mesostigma viride (Green alga)).